The chain runs to 284 residues: Pantothenate synthetase (284 aa).

30 to 37 (MGNLHNAH) is an ATP binding site. The Proton donor role is filled by His37. Residue Gln61 coordinates (R)-pantoate. Residue Gln61 coordinates beta-alanine. An ATP-binding site is contributed by 149-152 (GIKD). Residue Gln155 coordinates (R)-pantoate. ATP-binding positions include Val178 and 186–189 (MSSR).

Belongs to the pantothenate synthetase family. Homodimer.

The protein localises to the cytoplasm. It catalyses the reaction (R)-pantoate + beta-alanine + ATP = (R)-pantothenate + AMP + diphosphate + H(+). It functions in the pathway cofactor biosynthesis; (R)-pantothenate biosynthesis; (R)-pantothenate from (R)-pantoate and beta-alanine: step 1/1. In terms of biological role, catalyzes the condensation of pantoate with beta-alanine in an ATP-dependent reaction via a pantoyl-adenylate intermediate. This chain is Pantothenate synthetase, found in Saccharophagus degradans (strain 2-40 / ATCC 43961 / DSM 17024).